A 219-amino-acid polypeptide reads, in one-letter code: MISWIKGELVSSWQANNKFYILVNCQGLGYEIQTLESVFFDINSNKISEKEIILWLKHIKKEDSDMLFGFSTKDQRDFFIQILNIKGIGSQIGMSLLNKFSLNQLITAISNNDKKSISTVQGIGQKMTERIILELKSKVINKEIEKENLNINNFLEKNKDLDSIFKDIDLTLQSLNYSKKEIKNLFPKLINNIKNSSLEKESISFENLLKEAMNYLDHK.

The interval 1–71 is domain I; that stretch reads MISWIKGELV…EDSDMLFGFS (71 aa). A domain II region spans residues 72-150; it reads TKDQRDFFIQ…NKEIEKENLN (79 aa). Residues 151–161 form a flexible linker region; the sequence is INNFLEKNKDL. A domain III region spans residues 161–219; the sequence is LDSIFKDIDLTLQSLNYSKKEIKNLFPKLINNIKNSSLEKESISFENLLKEAMNYLDHK.

It belongs to the RuvA family. As to quaternary structure, homotetramer. Forms an RuvA(8)-RuvB(12)-Holliday junction (HJ) complex. HJ DNA is sandwiched between 2 RuvA tetramers; dsDNA enters through RuvA and exits via RuvB. An RuvB hexamer assembles on each DNA strand where it exits the tetramer. Each RuvB hexamer is contacted by two RuvA subunits (via domain III) on 2 adjacent RuvB subunits; this complex drives branch migration. In the full resolvosome a probable DNA-RuvA(4)-RuvB(12)-RuvC(2) complex forms which resolves the HJ.

It localises to the cytoplasm. Functionally, the RuvA-RuvB-RuvC complex processes Holliday junction (HJ) DNA during genetic recombination and DNA repair, while the RuvA-RuvB complex plays an important role in the rescue of blocked DNA replication forks via replication fork reversal (RFR). RuvA specifically binds to HJ cruciform DNA, conferring on it an open structure. The RuvB hexamer acts as an ATP-dependent pump, pulling dsDNA into and through the RuvAB complex. HJ branch migration allows RuvC to scan DNA until it finds its consensus sequence, where it cleaves and resolves the cruciform DNA. The protein is Holliday junction branch migration complex subunit RuvA of Prochlorococcus marinus subsp. pastoris (strain CCMP1986 / NIES-2087 / MED4).